The primary structure comprises 844 residues: Putative ubiquitin thioesterase 232R (844 aa).

4 disordered regions span residues 136–223, 261–287, 326–377, and 422–541; these read NSST…DEAE, SRRK…PPME, LLNG…PELT, and QKKQ…KLSV. Over residues 137 to 216 the composition is skewed to low complexity; the sequence is SSTRSRSPSV…PSRQSVRQSS (80 aa). 2 stretches are compositionally biased toward low complexity: residues 332 to 341 and 354 to 364; these read RPSPSLPQSR and RSPSVGSPSVR. A compositionally biased stretch (pro residues) spans 429–438; the sequence is SPSPTPPSPV. A compositionally biased stretch (basic and acidic residues) spans 472-485; sequence VQKKMGKSGEREPK. Over residues 504–518 the composition is skewed to low complexity; it reads SLRSRLSTQQQTQQS. The span at 526-535 shows a compositional bias: basic and acidic residues; that stretch reads ESIKPEESVR. Residues 590-725 enclose the OTU domain; that stretch reads YTVKQVSGDG…NYHYTSLVPI (136 aa). Residue Asp598 is part of the active site. Residue Cys601 is the Nucleophile of the active site. His718 is an active-site residue.

It catalyses the reaction Thiol-dependent hydrolysis of ester, thioester, amide, peptide and isopeptide bonds formed by the C-terminal Gly of ubiquitin (a 76-residue protein attached to proteins as an intracellular targeting signal).. Hydrolase that can remove conjugated ubiquitin from proteins and may therefore play an important regulatory role at the level of protein turnover by preventing degradation. This Aedes vexans (Inland floodwater mosquito) protein is Putative ubiquitin thioesterase 232R.